A 102-amino-acid polypeptide reads, in one-letter code: Colipase-like protein 2 (102 aa).

An N-terminal signal peptide occupies residues 1 to 23; the sequence is MAFTQALVTVLALLAGTLPHRHS. Cystine bridges form between Cys36-Cys47, Cys42-Cys58, Cys46-Cys80, Cys68-Cys88, and Cys82-Cys99.

It belongs to the colipase family.

The protein localises to the secreted. In Mus musculus (Mouse), this protein is Colipase-like protein 2 (Clpsl2).